Consider the following 353-residue polypeptide: S-adenosylmethionine decarboxylase proenzyme (353 aa).

Active-site residues include Glu-9 and Glu-12. Residue Ser-69 is the Schiff-base intermediate with substrate; via pyruvic acid of the active site. Residue Ser-69 is modified to Pyruvic acid (Ser); by autocatalysis. Catalysis depends on Cys-83, which acts as the Proton donor; for catalytic activity. Catalysis depends on proton acceptor; for processing activity residues Ser-232 and His-245.

The protein belongs to the eukaryotic AdoMetDC family. It depends on pyruvate as a cofactor. In terms of processing, is synthesized initially as an inactive proenzyme. Formation of the active enzyme involves a self-maturation process in which the active site pyruvoyl group is generated from an internal serine residue via an autocatalytic post-translational modification. Two non-identical subunits are generated from the proenzyme in this reaction, and the pyruvate is formed at the N-terminus of the alpha chain, which is derived from the carboxyl end of the proenzyme. The post-translation cleavage follows an unusual pathway, termed non-hydrolytic serinolysis, in which the side chain hydroxyl group of the serine supplies its oxygen atom to form the C-terminus of the beta chain, while the remainder of the serine residue undergoes an oxidative deamination to produce ammonia and the pyruvoyl group blocking the N-terminus of the alpha chain.

It carries out the reaction S-adenosyl-L-methionine + H(+) = S-adenosyl 3-(methylsulfanyl)propylamine + CO2. It participates in amine and polyamine biosynthesis; S-adenosylmethioninamine biosynthesis; S-adenosylmethioninamine from S-adenosyl-L-methionine: step 1/1. This is S-adenosylmethionine decarboxylase proenzyme (SAMDC) from Vicia faba (Broad bean).